The following is a 476-amino-acid chain: Glycogen synthase (476 aa).

Position 15 (K15) interacts with ADP-alpha-D-glucose.

This sequence belongs to the glycosyltransferase 1 family. Bacterial/plant glycogen synthase subfamily.

It catalyses the reaction [(1-&gt;4)-alpha-D-glucosyl](n) + ADP-alpha-D-glucose = [(1-&gt;4)-alpha-D-glucosyl](n+1) + ADP + H(+). It participates in glycan biosynthesis; glycogen biosynthesis. Synthesizes alpha-1,4-glucan chains using ADP-glucose. In Ligilactobacillus salivarius (strain UCC118) (Lactobacillus salivarius), this protein is Glycogen synthase.